We begin with the raw amino-acid sequence, 207 residues long: Pyridoxine/pyridoxamine 5'-phosphate oxidase (207 aa).

FMN contacts are provided by residues 53-58 (RMVLLK), 68-69 (YT), Lys-75, and Gln-97. A substrate-binding site is contributed by Lys-58. Substrate-binding residues include Tyr-115, Arg-119, and Ser-123. Residues 132–133 (QS) and Trp-177 each bind FMN. 183–185 (RLH) provides a ligand contact to substrate. Arg-187 lines the FMN pocket.

It belongs to the pyridoxamine 5'-phosphate oxidase family. In terms of assembly, homodimer. FMN is required as a cofactor.

The catalysed reaction is pyridoxamine 5'-phosphate + O2 + H2O = pyridoxal 5'-phosphate + H2O2 + NH4(+). It carries out the reaction pyridoxine 5'-phosphate + O2 = pyridoxal 5'-phosphate + H2O2. The protein operates within cofactor metabolism; pyridoxal 5'-phosphate salvage; pyridoxal 5'-phosphate from pyridoxamine 5'-phosphate: step 1/1. Its pathway is cofactor metabolism; pyridoxal 5'-phosphate salvage; pyridoxal 5'-phosphate from pyridoxine 5'-phosphate: step 1/1. In terms of biological role, catalyzes the oxidation of either pyridoxine 5'-phosphate (PNP) or pyridoxamine 5'-phosphate (PMP) into pyridoxal 5'-phosphate (PLP). In Bartonella henselae (strain ATCC 49882 / DSM 28221 / CCUG 30454 / Houston 1) (Rochalimaea henselae), this protein is Pyridoxine/pyridoxamine 5'-phosphate oxidase.